A 124-amino-acid chain; its full sequence is Small ribosomal subunit protein uS12 (124 aa).

Residues 1–42 (MPTIQQLVRKGRRPKVNKTKSPALRGNPQQRGVCSRVYTTTP) are disordered. A compositionally biased stretch (basic residues) spans 9–18 (RKGRRPKVNK). Polar residues predominate over residues 27–42 (NPQQRGVCSRVYTTTP). 3-methylthioaspartic acid is present on D89.

It belongs to the universal ribosomal protein uS12 family. In terms of assembly, part of the 30S ribosomal subunit. Contacts proteins S8 and S17. May interact with IF1 in the 30S initiation complex.

In terms of biological role, with S4 and S5 plays an important role in translational accuracy. Functionally, interacts with and stabilizes bases of the 16S rRNA that are involved in tRNA selection in the A site and with the mRNA backbone. Located at the interface of the 30S and 50S subunits, it traverses the body of the 30S subunit contacting proteins on the other side and probably holding the rRNA structure together. The combined cluster of proteins S8, S12 and S17 appears to hold together the shoulder and platform of the 30S subunit. The polypeptide is Small ribosomal subunit protein uS12 (Tropheryma whipplei (strain TW08/27) (Whipple's bacillus)).